Here is a 206-residue protein sequence, read N- to C-terminus: Riboflavin transporter RibU (206 aa).

The next 6 membrane-spanning stretches (helical) occupy residues 7–27 (MVLI…ILQF), 42–62 (IIPV…IILF), 79–99 (WIGV…VWFF), 113–133 (IVLA…FYAL), 147–169 (IFAG…PTYL), and 173–195 (VLPF…VTVF).

This sequence belongs to the prokaryotic riboflavin transporter (P-RFT) (TC 2.A.87) family. In terms of assembly, in E.coli forms a stable energy-coupling factor (ECF) transporter complex composed of 2 membrane-embedded substrate-binding protein (S component), 2 ATP-binding proteins (A and A' components) and 2 transmembrane proteins (T component), probably with a stoichiometry of 2:1:1:2. May be able to interact with more than 1 S component at a time.

The protein localises to the cell membrane. Its function is as follows. Mediates riboflavin uptake, may also transport FMN and roseoflavin. Probably a riboflavin-binding protein that interacts with the energy-coupling factor (ECF) ABC-transporter complex. Unlike classic ABC transporters this ECF transporter provides the energy necessary to transport a number of different substrates. The substrates themselves are bound by transmembrane, not extracytoplasmic soluble proteins. Uptake of riboflavin into proteosomes containing EcfA1A2T and RibU has been demonstrated. Uptake requires hydrolyzable Mg-ATP. In Lactococcus lactis subsp. cremoris (strain MG1363), this protein is Riboflavin transporter RibU (ribU).